Consider the following 512-residue polypeptide: NADH-quinone oxidoreductase subunit N 2 (512 aa).

The next 14 helical transmembrane spans lie at 23–43, 50–70, 88–108, 120–140, 144–164, 179–199, 220–240, 254–274, 295–315, 323–343, 351–371, 394–414, 429–449, and 477–497; these read AFVP…IDLF, TIIP…VYLQ, FAIF…LISI, SLGE…LMAS, LLMM…LVGY, VIYG…IYGL, ITLM…AGVV, PTPI…AMLI, WVTL…VVAL, LLAY…IVAD, LFYL…IILI, AASL…VGFI, VFVW…YFYF, and LVAF…PLSV.

This sequence belongs to the complex I subunit 2 family. NDH-1 is composed of 14 different subunits. Subunits NuoA, H, J, K, L, M, N constitute the membrane sector of the complex.

Its subcellular location is the cell inner membrane. The enzyme catalyses a quinone + NADH + 5 H(+)(in) = a quinol + NAD(+) + 4 H(+)(out). Functionally, NDH-1 shuttles electrons from NADH, via FMN and iron-sulfur (Fe-S) centers, to quinones in the respiratory chain. The immediate electron acceptor for the enzyme in this species is believed to be a menaquinone. Couples the redox reaction to proton translocation (for every two electrons transferred, four hydrogen ions are translocated across the cytoplasmic membrane), and thus conserves the redox energy in a proton gradient. This Chloroherpeton thalassium (strain ATCC 35110 / GB-78) protein is NADH-quinone oxidoreductase subunit N 2.